Reading from the N-terminus, the 67-residue chain is Large ribosomal subunit protein bL35 (67 aa).

Residues 21–50 are disordered; it reads KVMCGPGNKRHGLINRPQKMKRTNRGPQTM. The segment covering 28 to 44 has biased composition (basic residues); the sequence is NKRHGLINRPQKMKRTN.

This sequence belongs to the bacterial ribosomal protein bL35 family.

This is Large ribosomal subunit protein bL35 from Gluconobacter oxydans (strain 621H) (Gluconobacter suboxydans).